An 86-amino-acid polypeptide reads, in one-letter code: Arminin 7246 (86 aa).

The signal sequence occupies residues 1–18; it reads MRPEYAVLFLALIALTYA. The propeptide occupies 19–57; sequence RSNEDVREEIKNEIEKDILEDLVEDEGELDDKAIDVNDA. An Alanine amide modification is found at Ala-83.

Belongs to the arminin family. In terms of tissue distribution, expressed in entodermal epithelium along the body column.

It is found in the secreted. The protein localises to the target cell membrane. Antimicrobial peptide with a broad-spectrum antimicrobial activity. Keeps its antibacterial activity under a wide range of salt concentrations that mimic physiological conditions of human blood, which is surprising, since Hydra is an obligate freshwater animal with nearly no salt tolerance. Does not affect red blood cells. The polypeptide is Arminin 7246 (Hydra viridissima (Green hydra)).